The primary structure comprises 432 residues: UDP-N-acetylmuramate--L-alanine ligase (432 aa).

108 to 114 (GAHGKTS) contacts ATP.

It belongs to the MurCDEF family.

It localises to the cytoplasm. The enzyme catalyses UDP-N-acetyl-alpha-D-muramate + L-alanine + ATP = UDP-N-acetyl-alpha-D-muramoyl-L-alanine + ADP + phosphate + H(+). The protein operates within cell wall biogenesis; peptidoglycan biosynthesis. Functionally, cell wall formation. In Bacillus velezensis (strain DSM 23117 / BGSC 10A6 / LMG 26770 / FZB42) (Bacillus amyloliquefaciens subsp. plantarum), this protein is UDP-N-acetylmuramate--L-alanine ligase.